We begin with the raw amino-acid sequence, 392 residues long: 1-deoxy-D-xylulose 5-phosphate reductoisomerase (392 aa).

The NADPH site is built by threonine 10, glycine 11, serine 12, isoleucine 13, arginine 37, glutamine 38, and asparagine 124. A 1-deoxy-D-xylulose 5-phosphate-binding site is contributed by lysine 125. NADPH is bound at residue glutamate 126. Aspartate 150 serves as a coordination point for Mn(2+). 1-deoxy-D-xylulose 5-phosphate is bound by residues serine 151, glutamate 152, serine 179, and histidine 202. A Mn(2+)-binding site is contributed by glutamate 152. Residue glycine 208 coordinates NADPH. Serine 215, asparagine 220, lysine 221, and glutamate 224 together coordinate 1-deoxy-D-xylulose 5-phosphate. Residue glutamate 224 coordinates Mn(2+).

It belongs to the DXR family. Requires Mg(2+) as cofactor. Mn(2+) serves as cofactor.

It carries out the reaction 2-C-methyl-D-erythritol 4-phosphate + NADP(+) = 1-deoxy-D-xylulose 5-phosphate + NADPH + H(+). It participates in isoprenoid biosynthesis; isopentenyl diphosphate biosynthesis via DXP pathway; isopentenyl diphosphate from 1-deoxy-D-xylulose 5-phosphate: step 1/6. Catalyzes the NADPH-dependent rearrangement and reduction of 1-deoxy-D-xylulose-5-phosphate (DXP) to 2-C-methyl-D-erythritol 4-phosphate (MEP). This chain is 1-deoxy-D-xylulose 5-phosphate reductoisomerase, found in Cupriavidus metallidurans (strain ATCC 43123 / DSM 2839 / NBRC 102507 / CH34) (Ralstonia metallidurans).